The following is a 122-amino-acid chain: Large ribosomal subunit protein uL14 (122 aa).

Belongs to the universal ribosomal protein uL14 family. As to quaternary structure, part of the 50S ribosomal subunit. Forms a cluster with proteins L3 and L19. In the 70S ribosome, L14 and L19 interact and together make contacts with the 16S rRNA in bridges B5 and B8.

Functionally, binds to 23S rRNA. Forms part of two intersubunit bridges in the 70S ribosome. The protein is Large ribosomal subunit protein uL14 of Campylobacter lari (strain RM2100 / D67 / ATCC BAA-1060).